The sequence spans 164 residues: HTH-type transcriptional regulator IscR (164 aa).

The region spanning 2–131 (RLTSKGRYAV…NNITLDELVN (130 aa)) is the HTH rrf2-type domain. The segment at residues 28–51 (LADISERQGISLSYLEQLFSRLRK) is a DNA-binding region (H-T-H motif). [2Fe-2S] cluster-binding residues include C92, C98, and C104.

Requires [2Fe-2S] cluster as cofactor.

Functionally, regulates the transcription of several operons and genes involved in the biogenesis of Fe-S clusters and Fe-S-containing proteins. This chain is HTH-type transcriptional regulator IscR, found in Pectobacterium carotovorum subsp. carotovorum (strain PC1).